Consider the following 166-residue polypeptide: 2-C-methyl-D-erythritol 2,4-cyclodiphosphate synthase (166 aa).

2 residues coordinate a divalent metal cation: Asp-15 and His-17. 4-CDP-2-C-methyl-D-erythritol 2-phosphate contacts are provided by residues 15-17 (DIH) and 43-44 (HS). His-51 lines the a divalent metal cation pocket. 4-CDP-2-C-methyl-D-erythritol 2-phosphate-binding positions include 65-67 (DIG), 141-144 (TTNE), and Arg-151.

The protein belongs to the IspF family. As to quaternary structure, homotrimer. It depends on a divalent metal cation as a cofactor.

It carries out the reaction 4-CDP-2-C-methyl-D-erythritol 2-phosphate = 2-C-methyl-D-erythritol 2,4-cyclic diphosphate + CMP. It functions in the pathway isoprenoid biosynthesis; isopentenyl diphosphate biosynthesis via DXP pathway; isopentenyl diphosphate from 1-deoxy-D-xylulose 5-phosphate: step 4/6. Functionally, involved in the biosynthesis of isopentenyl diphosphate (IPP) and dimethylallyl diphosphate (DMAPP), two major building blocks of isoprenoid compounds. Catalyzes the conversion of 4-diphosphocytidyl-2-C-methyl-D-erythritol 2-phosphate (CDP-ME2P) to 2-C-methyl-D-erythritol 2,4-cyclodiphosphate (ME-CPP) with a corresponding release of cytidine 5-monophosphate (CMP). The chain is 2-C-methyl-D-erythritol 2,4-cyclodiphosphate synthase from Prochlorococcus marinus (strain MIT 9215).